The chain runs to 267 residues: Dihydropteroate synthase (267 aa).

A Pterin-binding domain is found at 1 to 251 (MTKTKIMGIL…NVELNAKLAK (251 aa)). Position 11 (Asn-11) interacts with Mg(2+). (7,8-dihydropterin-6-yl)methyl diphosphate is bound by residues Thr-51, Asp-84, Asn-103, Asp-167, Lys-203, and 239–241 (RVH).

Belongs to the DHPS family. Homodimer. Mg(2+) is required as a cofactor.

The enzyme catalyses (7,8-dihydropterin-6-yl)methyl diphosphate + 4-aminobenzoate = 7,8-dihydropteroate + diphosphate. It functions in the pathway cofactor biosynthesis; tetrahydrofolate biosynthesis; 7,8-dihydrofolate from 2-amino-4-hydroxy-6-hydroxymethyl-7,8-dihydropteridine diphosphate and 4-aminobenzoate: step 1/2. Catalyzes the condensation of para-aminobenzoate (pABA) with 6-hydroxymethyl-7,8-dihydropterin diphosphate (DHPt-PP) to form 7,8-dihydropteroate (H2Pte), the immediate precursor of folate derivatives. This chain is Dihydropteroate synthase (folP), found in Staphylococcus aureus (strain MRSA252).